The sequence spans 906 residues: Nuclear factor NF-kappa-B p100 subunit (906 aa).

In terms of domain architecture, RHD spans 34–223 (AVGPYLVIIE…DPIHDSKSPG (190 aa)). Residues 336 to 340 (RNRKK) carry the Nuclear localization signal motif. Positions 345–374 (FPQHFGGGSHMGGAGGAGGFGAGGGGNLSF) are GRR. ANK repeat units lie at residues 472-501 (NGDT…SIPS), 511-540 (LQQT…NPTL), 544-573 (YGNS…SATP), 582-611 (QGLL…DVNG), 616-646 (GGRT…NVNS), and 650-679 (AGNT…DVQR). Disordered stretches follow at residues 677–734 (VQRE…GPRQ) and 857–906 (EPLE…QQVH). Residues 684–695 (PVSPSSVRVPSS) are compositionally biased toward low complexity. Residues 697–708 (TDGDPEEQEQEQ) show a composition bias toward acidic residues. The Death domain maps to 771-857 (RNHLLSLDTD…GAVRMLRKPE (87 aa)).

Component of the NF-kappa-B RelB-p52 complex. While translation occurs, the particular unfolded structure after the GRR repeat promotes the generation of p52 making it an acceptable substrate for the proteasome. This process is known as cotranslational processing. The processed form is active and the unprocessed form acts as an inhibitor (I kappa B-like), being able to form cytosolic complexes with NF-kappa B, trapping it in the cytoplasm. Complete folding of the region downstream of the GRR repeat precludes processing. Post-translationally, constitutive processing is tightly suppressed by its C-terminal processing inhibitory domain, named PID, which contains the death domain.

The protein resides in the nucleus. Its subcellular location is the cytoplasm. NF-kappa-B is a pleiotropic transcription factor present in almost all cell types and is the endpoint of a series of signal transduction events that are initiated by a vast array of stimuli related to many biological processes such as inflammation, immunity, differentiation, cell growth, tumorigenesis and apoptosis. NF-kappa-B is a homo- or heterodimeric complex formed by the Rel-like domain-containing proteins RELA/p65, RELB, NFKB1/p105, NFKB1/p50, REL and NFKB2/p52. The dimers bind at kappa-B sites in the DNA of their target genes and the individual dimers have distinct preferences for different kappa-B sites that they can bind with distinguishable affinity and specificity. Different dimer combinations act as transcriptional activators or repressors, respectively. NF-kappa-B is controlled by various mechanisms of post-translational modification and subcellular compartmentalization as well as by interactions with other cofactors or corepressors. NF-kappa-B complexes are held in the cytoplasm in an inactive state complexed with members of the NF-kappa-B inhibitor (I-kappa-B) family. In a conventional activation pathway, I-kappa-B is phosphorylated by I-kappa-B kinases (IKKs) in response to different activators, subsequently degraded thus liberating the active NF-kappa-B complex which translocates to the nucleus. In a non-canonical activation pathway, the MAP3K14-activated CHUK/IKKA homodimer phosphorylates NFKB2/p100 associated with RelB, inducing its proteolytic processing to NFKB2/p52 and the formation of NF-kappa-B RelB-p52 complexes. The NF-kappa-B heterodimeric RelB-p52 complex is a transcriptional activator. NFKB2 appears to have dual functions such as cytoplasmic retention of attached NF-kappa-B proteins by p100 and generation of p52 by a cotranslational processing. The proteasome-mediated process ensures the production of both p52 and p100 and preserves their independent function. p52 binds to the kappa-B consensus sequence 5'-GGRNNYYCC-3', located in the enhancer region of genes involved in immune response and acute phase reactions. In concert with RELB, may play a role in the regulation of the circadian clock. The polypeptide is Nuclear factor NF-kappa-B p100 subunit (NFKB2) (Gallus gallus (Chicken)).